An 811-amino-acid polypeptide reads, in one-letter code: TLR4 interactor with leucine rich repeats (811 aa).

Positions 1-25 are cleaved as a signal peptide; that stretch reads MEAARALRLLLVVCGCLALPPLAEP. Positions 26-57 constitute an LRRNT domain; that stretch reads VCPERCDCQHPQHLLCTNRGLRVVPKTSSLPS. The Extracellular segment spans residues 26 to 696; it reads VCPERCDCQH…AGSRGGVDYQ (671 aa). LRR repeat units lie at residues 61 to 81, 84 to 105, 108 to 129, 132 to 153, 156 to 177, 180 to 201, 204 to 223, 230 to 251, 254 to 275, 278 to 299, 302 to 323, and 326 to 347; these read VLTY…DFHR, QLRR…TFEK, RLEE…TLAP, KLRI…SFEG, SLVK…VFAP, NLLY…AFAQ, KLRF…RHAA, SLSS…IFQH, RLGL…AFWG, ALRE…LLEP, SLEA…TFGH, and RLRE…IFAA. An N-linked (GlcNAc...) asparagine glycan is attached at Asn-73. An N-linked (GlcNAc...) asparagine glycan is attached at Asn-209. The LRRCT domain occupies 359–416; sequence NGWTCDCRLRGLKRWMGDWHSQGRLLTVFVQCRHPPALRGKYLDYLDDQQLQNGSCAD. Residues 484-549 form a disordered region; that stretch reads LSRRGPGLQQ…PSPAGDPWQR (66 aa). Composition is skewed to low complexity over residues 492 to 508 and 530 to 544; these read QQPS…APQS and PTPT…SPAG. N-linked (GlcNAc...) asparagine glycosylation is present at Asn-589. The chain crosses the membrane as a helical span at residues 697 to 717; the sequence is LLTLALLTVNALLVLLALAAW. The Cytoplasmic portion of the chain corresponds to 718–811; it reads ASRWLRRKLR…EDRLLQRFAD (94 aa). Residue Ser-798 is modified to Phosphoserine.

As to quaternary structure, belongs to the lipopolysaccharide (LPS) receptor, a multi-protein complex containing at least CD14, MD-2 and TLR4. Interacts with TLR4; this interaction is greatly enhanced by LPS stimulation. Interacts with LPS. Post-translationally, N-glycolysaled. In terms of tissue distribution, highly expressed in the brain, ovary, small intestine and spleen.

It is found in the membrane. Its function is as follows. Component of the TLR4 signaling complex. Mediates the innate immune response to bacterial lipopolysaccharide (LPS) leading to cytokine secretion. This is TLR4 interactor with leucine rich repeats (TRIL) from Homo sapiens (Human).